Here is a 325-residue protein sequence, read N- to C-terminus: MSETANWQPSAAIANLLKRATILAEIRRFFADRGVLEVETPAMGQFTVTDIQLFSFQTEFVGPGAADGMTLYLMTSPEYHMKRLLAAGSGPIYQLGRCFRNEEAGRYHNPEFTMLEWYRPHYDMYRLMNEVDDLLQQILDCESAESLSYQQAFLRYLDIDPLSAEKEKLREIAAKLDLSNIADIEEDRDTLLQLLFAVGVEPHIGTEKPTFIYHFPASQASLAEISKEDHRVAERFEVYFKGVELANGFRELTDSHEQCQRFERDNRKRAALGLPVRPIDENLIGALKQGMPECAGVALGVDRLVMLALGAEKLSDVMAFSITKA.

76 to 78 is a substrate binding site; it reads SPE. ATP contacts are provided by residues 100 to 102 and N109; that span reads RNE. Residue Y118 participates in substrate binding. 244-245 contacts ATP; the sequence is EL. E251 serves as a coordination point for substrate. An ATP-binding site is contributed by G300.

The protein belongs to the class-II aminoacyl-tRNA synthetase family. EpmA subfamily. As to quaternary structure, homodimer.

It catalyses the reaction D-beta-lysine + L-lysyl-[protein] + ATP = N(6)-((3R)-3,6-diaminohexanoyl)-L-lysyl-[protein] + AMP + diphosphate + H(+). Functionally, with EpmB is involved in the beta-lysylation step of the post-translational modification of translation elongation factor P (EF-P). Catalyzes the ATP-dependent activation of (R)-beta-lysine produced by EpmB, forming a lysyl-adenylate, from which the beta-lysyl moiety is then transferred to the epsilon-amino group of a conserved specific lysine residue in EF-P. The sequence is that of Elongation factor P--(R)-beta-lysine ligase from Photorhabdus laumondii subsp. laumondii (strain DSM 15139 / CIP 105565 / TT01) (Photorhabdus luminescens subsp. laumondii).